The primary structure comprises 875 residues: uncharacterized protein (875 aa).

A disordered region spans residues 83–149 (PFQPPPPQPF…QPPQPPPQQL (67 aa)). Residues 101–147 (QQPPQPPPDQPQQPQPPQQPPQQPPQQQPQPPQPPQQPPQPPQPPPQ) show a composition bias toward pro residues.

This is an uncharacterized protein from Orgyia pseudotsugata multicapsid polyhedrosis virus (OpMNPV).